Consider the following 132-residue polypeptide: RuBisCO chaperone RbcX (132 aa).

The interval 110–132 (HLSLSNPSPESEQQTISDTDWDH) is disordered. The segment covering 111–132 (LSLSNPSPESEQQTISDTDWDH) has biased composition (polar residues).

This sequence belongs to the RbcX family. As to quaternary structure, homodimer. Interacts with the exposed C-terminal peptide of RbcL via its central cleft, contacts a second RbcL monomer via its peripheral polar surface. RbcX and Raf1 can bind simultaneously to RbcL.

Its subcellular location is the carboxysome. The protein localises to the cytoplasm. Functionally, an RbcL-specific chaperone. The central cleft of the RbcX homodimer (RbcX2) binds the C-terminus of an RbcL monomer, stabilizing the C-terminus and probably preventing its reassociation with chaperonin GroEL-ES. At the same time the peripheral region of RbcX2 binds a second RbcL monomer, bridging the RbcL homodimers in the correct orientation. The RbcX2(2)-bound RbcL dimers then assemble into the RbcL8 core (RbcL8-(RbcX2)8). RbcS binding triggers the release of RbcX2. In terms of biological role, when rbcL-rbcX-rbcS or rbcL-rbcS were overexpressed in E.coli no change in reconstituted RuBisCO activity was observed, which suggests RbcX plays no role in RuBisCO assembly in this system. However in PubMed:8472962 E.coli chaperones groL and groS were also overexpressed, which may compensate for lack of rbcX. The protein is RuBisCO chaperone RbcX of Nostoc sp. (strain PCC 7120 / SAG 25.82 / UTEX 2576).